The sequence spans 306 residues: Curved DNA-binding protein (306 aa).

The 65-residue stretch at 5–69 folds into the J domain; sequence DYYAIMGVKP…QRRAEYDQMW (65 aa).

It is found in the cytoplasm. The protein localises to the nucleoid. Its function is as follows. DNA-binding protein that preferentially recognizes a curved DNA sequence. It is probably a functional analog of DnaJ; displays overlapping activities with DnaJ, but functions under different conditions, probably acting as a molecular chaperone in an adaptive response to environmental stresses other than heat shock. Lacks autonomous chaperone activity; binds native substrates and targets them for recognition by DnaK. Its activity is inhibited by the binding of CbpM. The protein is Curved DNA-binding protein of Escherichia coli (strain K12 / MC4100 / BW2952).